The primary structure comprises 85 residues: Ice-structuring protein 4 (85 aa).

Residues 1-21 (MRITEANPDPDAKAVPAAAAP) form the signal peptide.

Belongs to the type-I AFP family.

The protein resides in the secreted. Functionally, contributes to protect fish blood from freezing at subzero sea water temperatures. Lowers the blood freezing point. Binds to nascent ice crystals and prevents further growth. The sequence is that of Ice-structuring protein 4 from Pseudopleuronectes americanus (Winter flounder).